A 966-amino-acid chain; its full sequence is Alanine--tRNA ligase (966 aa).

Zn(2+)-binding residues include His646, His650, Cys750, and His754. Positions 927 to 949 (DRLGGGGGGRPSLASAGGRDPEA) are disordered.

Belongs to the class-II aminoacyl-tRNA synthetase family. It depends on Zn(2+) as a cofactor.

Its subcellular location is the cytoplasm. The enzyme catalyses tRNA(Ala) + L-alanine + ATP = L-alanyl-tRNA(Ala) + AMP + diphosphate. Its function is as follows. Catalyzes the attachment of alanine to tRNA(Ala) in a two-step reaction: alanine is first activated by ATP to form Ala-AMP and then transferred to the acceptor end of tRNA(Ala). Also edits incorrectly charged Ser-tRNA(Ala) and Gly-tRNA(Ala) via its editing domain. The polypeptide is Alanine--tRNA ligase (Salinibacter ruber (strain DSM 13855 / M31)).